Here is a 339-residue protein sequence, read N- to C-terminus: MKPDLPPRIAVLLVNLGTPDEPTAPAVRRYLKQFLSDPRVIEIPKFLWAIILNLFVLPSRPKRVAEAYASIWDGDSPMRNILNTQVEMLDKRLAERAAPFRVSVHAAMSYGNPGLPDVMDKLRSEGVDHFVMLPVFPQYSATSTGAVYDAMTKWSLKQRNLPNMTIVKDYFAHPLYIKALADSIRRFQAIHGKPEKLMFSFHGIPQPYADKGDPYPKRCKCTAAQVAHELGLKPDEWIISFQSRFGKQEWIKPYTDVVLEDWGKSGIRSVQILSPAFSADCLETLEELAIENRETFLKAGGEEYHYIPALNADEAHIDLLEAMSAPLVKGWAGTLDGWA.

Fe cation-binding residues include His-202 and Glu-283.

The protein belongs to the ferrochelatase family.

It localises to the cytoplasm. The catalysed reaction is heme b + 2 H(+) = protoporphyrin IX + Fe(2+). It participates in porphyrin-containing compound metabolism; protoheme biosynthesis; protoheme from protoporphyrin-IX: step 1/1. Functionally, catalyzes the ferrous insertion into protoporphyrin IX. This chain is Ferrochelatase, found in Psychrobacter arcticus (strain DSM 17307 / VKM B-2377 / 273-4).